Reading from the N-terminus, the 189-residue chain is Ribonuclease HII (189 aa).

The RNase H type-2 domain maps to 1 to 189 (MIAGVDEAGR…IAALLKNNKK (189 aa)). Positions 6, 7, and 98 each coordinate a divalent metal cation.

Belongs to the RNase HII family. It depends on Mn(2+) as a cofactor. Mg(2+) is required as a cofactor.

It localises to the cytoplasm. It catalyses the reaction Endonucleolytic cleavage to 5'-phosphomonoester.. In terms of biological role, endonuclease that specifically degrades the RNA of RNA-DNA hybrids. This is Ribonuclease HII from Dichelobacter nodosus (strain VCS1703A).